Consider the following 74-residue polypeptide: Transcription attenuation protein MtrB (74 aa).

The protein belongs to the MtrB family. In terms of assembly, oligomer of 11 identical subunits arranged in doughnut-like structure.

Functionally, required for transcription attenuation control in the Trp operon. This trans-acting factor seems to recognize a 10 bases nucleotide sequence in the Trp leader transcript causing transcription termination. Binds the leader RNA only in presence of L-tryptophan. The chain is Transcription attenuation protein MtrB from Geobacillus sp. (strain WCH70).